The sequence spans 581 residues: Estrogen receptor (581 aa).

A modulating region spans residues 1–144; the sequence is MYPEDSRVSG…GFEMAKEMRF (144 aa). Disordered regions lie at residues 45–66 and 99–123; these read APLD…SGPN and RSSV…DSYS. The span at 56–66 shows a compositional bias: polar residues; that stretch reads GSLQSLGSGPN. Residues 142 to 217 constitute a DNA-binding region (nuclear receptor); sequence MRFCAVCSDY…VGMMKGGVRK (76 aa). NR C4-type zinc fingers lie at residues 145–165 and 181–200; these read CAVC…CEGC and CPAT…CQAC. The interval 211–272 is hinge; the sequence is MKGGVRKDRG…GGGKSSVISM (62 aa). Residues 216-246 show a composition bias toward basic and acidic residues; the sequence is RKDRGRVLRRDKRRTGTSDRDKASKGLEHRT. Residues 216–269 form a disordered region; the sequence is RKDRGRVLRRDKRRTGTSDRDKASKGLEHRTAPPQDRRKHISSSAGGGGGKSSV. The region spanning 273–509 is the NR LBD domain; that stretch reads PPDQVLLLLR…DLLLEMLDAH (237 aa). Basic and acidic residues predominate over residues 514 to 528; that stretch reads PDRPAETWSQADREP. The segment at 514-581 is disordered; it reads PDRPAETWSQ…VHPHPMKPTE (68 aa). The segment covering 572–581 has biased composition (basic residues); the sequence is VHPHPMKPTE.

Belongs to the nuclear hormone receptor family. NR3 subfamily. As to quaternary structure, binds DNA as a homodimer. Can form a heterodimer with ER-beta.

Its subcellular location is the nucleus. Functionally, the steroid hormones and their receptors are involved in the regulation of eukaryotic gene expression and affect cellular proliferation and differentiation in target tissues. The polypeptide is Estrogen receptor (esr1) (Sparus aurata (Gilthead sea bream)).